The sequence spans 483 residues: MQLKDAKLFRQQAYVDGAWVDADNGQTIKVNNPATGEIIGSVPKMGAAETRRAIEAADKALPAWRALTAKERANKLRRWFDLMIENQDDLARLMTIEQGKPLAEAKGEIAYAASFLEWFGEEAKRIYGDTIPGHQPDKRIIVIKQPIGVTAAITPWNFPSAMITRKAGPALAAGCTMVLKPASQTPYSALALAELAERAGIPKGVFSVVTGSAGEVGGELTSNPIVRKLTFTGSTEIGRQLMAECAQDIKKVSLELGGNAPFIVFDDADLDAAVEGALISKYRNNGQTCVCANRLYVQDGVYDAFVDKLKAAVAKLNIGNGLEAGVTTGPLIDAKAVAKVEEHIADAVSKGAKVVSGGKPHALGGTFFEPTILVDVPKNALVSKDETFGPLAPVFRFKDEAEVIAMSNDTEFGLASYFYARDLARVFRVAEQLEYGMVGINTGLISNEVAPFGGIKASGLGREGSKYGIEDYLEIKYLCLGGI.

NADP(+) contacts are provided by residues 156 to 157 (WN), 180 to 183 (KPAS), and 233 to 234 (GS). Glutamate 255 functions as the Proton acceptor in the catalytic mechanism. Leucine 256 contributes to the NADP(+) binding site. Cysteine 289 acts as the Nucleophile in catalysis. Residue glutamate 386 participates in NADP(+) binding.

Belongs to the aldehyde dehydrogenase family.

It catalyses the reaction 5-oxopentanoate + NADP(+) + H2O = glutarate + NADPH + 2 H(+). It participates in amino-acid degradation. Catalyzes the conversion of 5-oxopentanoate (glutarate semialdehyde) to glutarate. Involved in L-lysine degradation. The sequence is that of Glutarate-semialdehyde dehydrogenase from Pseudomonas aeruginosa (strain ATCC 15692 / DSM 22644 / CIP 104116 / JCM 14847 / LMG 12228 / 1C / PRS 101 / PAO1).